Reading from the N-terminus, the 520-residue chain is Basal body-orientation factor 1 (520 aa).

A compositionally biased stretch (basic residues) spans Met1–Asp21. The segment at Met1 to Ile34 is disordered. A compositionally biased stretch (basic and acidic residues) spans Gly22 to Ile34. Coiled coils occupy residues Lys27 to Met175 and Val245 to Ala386. The segment at Ala468 to Glu492 is disordered. Residues His469–Ser478 show a composition bias toward low complexity. Residues Glu479–Glu492 show a composition bias toward polar residues.

It belongs to the BBOF1 family.

The protein localises to the cytoplasm. Its subcellular location is the cytoskeleton. It is found in the cilium basal body. Functionally, basal body protein required in multiciliate cells to align and maintain cilia orientation in response to flow. May act by mediating a maturation step that stabilizes and aligns cilia orientation. Not required to respond to planar cell polarity (PCP) or flow-based orientation cues. In Danio rerio (Zebrafish), this protein is Basal body-orientation factor 1.